We begin with the raw amino-acid sequence, 505 residues long: Glycerol kinase (505 aa).

Thr-14 serves as a coordination point for ADP. ATP is bound by residues Thr-14, Thr-15, and Ser-16. Thr-14 lines the sn-glycerol 3-phosphate pocket. Arg-18 is a binding site for ADP. Sn-glycerol 3-phosphate contacts are provided by Arg-84, Glu-85, Tyr-136, and Asp-246. The glycerol site is built by Arg-84, Glu-85, Tyr-136, Asp-246, and Gln-247. Residues Thr-268 and Gly-311 each coordinate ADP. Thr-268, Gly-311, Gln-315, and Gly-412 together coordinate ATP. 2 residues coordinate ADP: Gly-412 and Asn-416.

This sequence belongs to the FGGY kinase family.

The catalysed reaction is glycerol + ATP = sn-glycerol 3-phosphate + ADP + H(+). Its pathway is polyol metabolism; glycerol degradation via glycerol kinase pathway; sn-glycerol 3-phosphate from glycerol: step 1/1. With respect to regulation, inhibited by fructose 1,6-bisphosphate (FBP). Functionally, key enzyme in the regulation of glycerol uptake and metabolism. Catalyzes the phosphorylation of glycerol to yield sn-glycerol 3-phosphate. The protein is Glycerol kinase of Vibrio cholerae serotype O1 (strain ATCC 39315 / El Tor Inaba N16961).